Consider the following 260-residue polypeptide: Sulfoquinovose 1-dehydrogenase (260 aa).

The Proton acceptor role is filled by tyrosine 160.

This sequence belongs to the short-chain dehydrogenases/reductases (SDR) family.

The enzyme catalyses 6-sulfo-D-quinovose + NAD(+) = 6-deoxy-6-sulfo-D-glucono-1,5-lactone + NADH + H(+). Functionally, catalyzes the oxidation of sulfoquinovose to 6-deoxy-6-sulfo-D-glucono-1,5-lactone, with a strong preference for NAD(+) as the electron acceptor. Is involved in a degradation pathway of sulfoquinovose (SQ) that allows P.putida SQ1 to use SQ as the sole carbon and energy source for growth. In Pseudomonas putida (Arthrobacter siderocapsulatus), this protein is Sulfoquinovose 1-dehydrogenase.